The sequence spans 415 residues: Exodeoxyribonuclease 7 large subunit (415 aa).

This sequence belongs to the XseA family. As to quaternary structure, heterooligomer composed of large and small subunits.

Its subcellular location is the cytoplasm. The enzyme catalyses Exonucleolytic cleavage in either 5'- to 3'- or 3'- to 5'-direction to yield nucleoside 5'-phosphates.. In terms of biological role, bidirectionally degrades single-stranded DNA into large acid-insoluble oligonucleotides, which are then degraded further into small acid-soluble oligonucleotides. In Mycobacterium bovis (strain ATCC BAA-935 / AF2122/97), this protein is Exodeoxyribonuclease 7 large subunit.